The primary structure comprises 334 residues: Anthranilate phosphoribosyltransferase (334 aa).

5-phospho-alpha-D-ribose 1-diphosphate-binding positions include G79, 82-83 (GD), S87, 89-92 (NIST), 107-115 (KAGNRSISS), and S119. Anthranilate is bound at residue G79. S91 contacts Mg(2+). N110 is a binding site for anthranilate. R165 provides a ligand contact to anthranilate. Residues D224 and E225 each coordinate Mg(2+).

It belongs to the anthranilate phosphoribosyltransferase family. As to quaternary structure, homodimer. It depends on Mg(2+) as a cofactor.

It catalyses the reaction N-(5-phospho-beta-D-ribosyl)anthranilate + diphosphate = 5-phospho-alpha-D-ribose 1-diphosphate + anthranilate. Its pathway is amino-acid biosynthesis; L-tryptophan biosynthesis; L-tryptophan from chorismate: step 2/5. Its function is as follows. Catalyzes the transfer of the phosphoribosyl group of 5-phosphorylribose-1-pyrophosphate (PRPP) to anthranilate to yield N-(5'-phosphoribosyl)-anthranilate (PRA). This Streptococcus thermophilus (strain ATCC BAA-250 / LMG 18311) protein is Anthranilate phosphoribosyltransferase.